We begin with the raw amino-acid sequence, 518 residues long: Glucose-6-phosphate 1-dehydrogenase (518 aa).

NADP(+) contacts are provided by residues 36 to 43, R70, and K169; that span reads GASGDLAK. Residues K169, 199–203, E237, and D256 contribute to the D-glucose 6-phosphate site; that span reads HYLGK. H261 functions as the Proton acceptor in the catalytic mechanism. Residue R356 participates in NADP(+) binding. K359 and R364 together coordinate D-glucose 6-phosphate. NADP(+)-binding residues include K365, R369, and R392. D-glucose 6-phosphate is bound at residue Q394. Residues 400-402, 420-422, R486, Y502, and W508 contribute to the NADP(+) site; these read YFK and DLT.

This sequence belongs to the glucose-6-phosphate dehydrogenase family.

It is found in the cytoplasm. It localises to the cytosol. It catalyses the reaction D-glucose 6-phosphate + NADP(+) = 6-phospho-D-glucono-1,5-lactone + NADPH + H(+). Its pathway is carbohydrate degradation; pentose phosphate pathway; D-ribulose 5-phosphate from D-glucose 6-phosphate (oxidative stage): step 1/3. Its function is as follows. Cytosolic glucose-6-phosphate dehydrogenase that catalyzes the first and rate-limiting step of the oxidative branch within the pentose phosphate pathway/shunt, an alternative route to glycolysis for the dissimilation of carbohydrates and a major source of reducing power and metabolic intermediates for fatty acid and nucleic acid biosynthetic processes. This chain is Glucose-6-phosphate 1-dehydrogenase (Zw), found in Drosophila yakuba (Fruit fly).